A 218-amino-acid chain; its full sequence is Octanoyltransferase (218 aa).

The BPL/LPL catalytic domain maps to 32–218 (GEAAEAIWLL…LRTFPQHFPD (187 aa)). Residues 71–78 (RGGQYTYH), 151–153 (AIG), and 164–166 (GLS) contribute to the substrate site. The active-site Acyl-thioester intermediate is the C182.

Belongs to the LipB family.

It localises to the cytoplasm. The catalysed reaction is octanoyl-[ACP] + L-lysyl-[protein] = N(6)-octanoyl-L-lysyl-[protein] + holo-[ACP] + H(+). The protein operates within protein modification; protein lipoylation via endogenous pathway; protein N(6)-(lipoyl)lysine from octanoyl-[acyl-carrier-protein]: step 1/2. Its function is as follows. Catalyzes the transfer of endogenously produced octanoic acid from octanoyl-acyl-carrier-protein onto the lipoyl domains of lipoate-dependent enzymes. Lipoyl-ACP can also act as a substrate although octanoyl-ACP is likely to be the physiological substrate. The polypeptide is Octanoyltransferase (Cereibacter sphaeroides (strain ATCC 17029 / ATH 2.4.9) (Rhodobacter sphaeroides)).